Reading from the N-terminus, the 320-residue chain is Cytochrome c biogenesis protein CcsA (320 aa).

8 consecutive transmembrane segments (helical) span residues 15 to 35 (FSIVSIVITIHLITLLVDEII), 43 to 63 (KGMIAIFLCITGLLVTRWIYS), 71 to 91 (LYESLIFLSWSLSVIHIVPYF), 98 to 118 (LSTITASSVIFTQGFATSGLL), 143 to 163 (MILSYAALLCGSLLSVALLVI), 224 to 244 (VISLGFIFLTIGILSGAVWAN), 251 to 271 (WNWDPKETWAFITWIVFAIYL), and 285 to 305 (AIVASIGFLIIWICYFGVNLL).

This sequence belongs to the CcmF/CycK/Ccl1/NrfE/CcsA family. As to quaternary structure, may interact with Ccs1.

The protein localises to the plastid. It localises to the chloroplast thylakoid membrane. Its function is as follows. Required during biogenesis of c-type cytochromes (cytochrome c6 and cytochrome f) at the step of heme attachment. This chain is Cytochrome c biogenesis protein CcsA, found in Panax ginseng (Korean ginseng).